The following is a 125-amino-acid chain: Lymphocyte antigen 6 complex locus protein G6c (125 aa).

The N-terminal stretch at 1–18 (MRALLLLSLSALLCWVSA) is a signal peptide. A UPAR/Ly6 domain is found at 20 to 111 (IRCHSCYKLP…PRPTPALTLV (92 aa)). Disulfide bonds link C22-C47, C25-C33, and C39-C65. N88 is a glycosylation site (N-linked (GlcNAc...) asparagine). An intrachain disulfide couples C92 to C97. The GPI-anchor amidated serine moiety is linked to residue S99. Positions 100 to 125 (PAPRPTPALTLVFLTSLAGLGLWLLH) are cleaved as a propeptide — removed in mature form.

Post-translationally, N-glycosylated.

It is found in the cell membrane. The chain is Lymphocyte antigen 6 complex locus protein G6c (LY6G6C) from Bos taurus (Bovine).